The following is a 390-amino-acid chain: cAMP-dependent protein kinase regulatory subunit (390 aa).

Residues 1–17 show a composition bias toward polar residues; that stretch reads MSASGFTSPFGANSNPF. The disordered stretch occupies residues 1–81; it reads MSASGFTSPF…RPQNPDGYPA (81 aa). The interval 1-129 is dimerization and phosphorylation; it reads MSASGFTSPF…RLKKAIQGNF (129 aa). Phosphoserine is present on Ser90. 3',5'-cyclic AMP-binding positions include 130-261, Glu208, Arg217, 262-383, Glu329, and Arg338; these read LFSH…EEVP and ILST…GVEE.

Belongs to the cAMP-dependent kinase regulatory chain family. As to quaternary structure, tetramer, composed of 2 regulatory (R) and 2 catalytic (C) subunits. In the presence of cAMP it dissociates into 2 active monomeric C subunits and an R dimer.

The chain is cAMP-dependent protein kinase regulatory subunit (SUM1) from Pyricularia oryzae (strain 70-15 / ATCC MYA-4617 / FGSC 8958) (Rice blast fungus).